Here is a 488-residue protein sequence, read N- to C-terminus: Centrosomal protein cep57l1 (488 aa).

Residues 71–226 (LESEKTHARD…AQVQTSLEVN (156 aa)) are a coiled coil. 2 disordered regions span residues 232-272 (SASS…PPSK) and 311-342 (PRVS…LMSS). A compositionally biased stretch (basic residues) spans 241–250 (RKVKKKKQSK). Composition is skewed to basic and acidic residues over residues 259 to 270 (PSSKEPLSKEPP) and 314 to 325 (SQKDPKTVEHKP). The stretch at 377-403 (KNTDMREDLERELDYLVKQMEIKSDQI) forms a coiled coil. The disordered stretch occupies residues 416–464 (LKKTAKKQPRPPSTTKPAEDEQNIGATDPCTPRNKGNLANGTGTPNSKA). A compositionally biased stretch (polar residues) spans 452 to 464 (NLANGTGTPNSKA).

The protein belongs to the translokin family. Interacts with clip1, mis12, ndc80 and zwint. Interacts with gamma-tubulin.

The protein resides in the cytoplasm. It is found in the cytoskeleton. Its subcellular location is the microtubule organizing center. The protein localises to the centrosome. It localises to the chromosome. The protein resides in the centromere. It is found in the kinetochore. Its subcellular location is the spindle. In terms of biological role, required for spindle microtubule attachment to both kinetochores and centrosomes. Also functions to tether minus-ends of spindle microtubules to centrosomes. May act by forming ring-like structures around microtubules, or by serving as a cross-linker or scaffold at the attachment site. The protein is Centrosomal protein cep57l1 (cep57l1) of Xenopus laevis (African clawed frog).